A 275-amino-acid chain; its full sequence is MPALRPALLWALLALWLCCATPAHALQCRDGYEPCVNEGMCVTYHNGTGYCKCPEGFLGEYCQHRDPCEKNRCQNGGTCVAQAMLGKATCRCASGFTGEDCQYSTSHPCFVSRPCLNGGTCHMLSRDTYECTCQVGFTGKECQWTDACLSHPCANGSTCTTVANQFSCKCLTGFTGQKCETDVNECDIPGHCQHGGICLNLPGSYQCQCLQGFTGQYCDSLYVPCAPSPCVNGGTCRQTGDFTFECNCLPETVRRGTELWERDREVWNGKEHDEN.

The signal sequence occupies residues 1–25 (MPALRPALLWALLALWLCCATPAHA). EGF-like domains lie at 26–63 (LQCR…EYCQ), 64–102 (HRDP…EDCQ), 105–143 (TSHP…KECQ), and 144–180 (WTDA…QKCE). 17 disulfides stabilise this stretch: cysteine 28–cysteine 41, cysteine 35–cysteine 51, cysteine 53–cysteine 62, cysteine 68–cysteine 79, cysteine 73–cysteine 90, cysteine 92–cysteine 101, cysteine 109–cysteine 121, cysteine 115–cysteine 131, cysteine 133–cysteine 142, cysteine 148–cysteine 159, cysteine 153–cysteine 168, cysteine 170–cysteine 179, cysteine 186–cysteine 198, cysteine 192–cysteine 207, cysteine 209–cysteine 218, cysteine 225–cysteine 236, and cysteine 230–cysteine 246. Asparagine 46 carries an N-linked (GlcNAc...) asparagine glycan. Asparagine 155 carries N-linked (GlcNAc...) asparagine glycosylation. In terms of domain architecture, EGF-like 5; calcium-binding spans 182–219 (DVNECDIPGHCQHGGICLNLPGSYQCQCLQGFTGQYCD). The EGF-like 6 domain occupies 221–258 (LYVPCAPSPCVNGGTCRQTGDFTFECNCLPETVRRGTE).

Belongs to the NOTCH family. As to quaternary structure, interacts with NOTCH2. Interacts with DLL1; the interaction is direct. Expressed in radial glia neural stem cells during cortical development.

It localises to the secreted. Its function is as follows. Human-specific protein that promotes neural progenitor proliferation and evolutionary expansion of the brain neocortex by regulating the Notch signaling pathway. Able to promote neural progenitor self-renewal, possibly by down-regulating neuronal differentiation genes, thereby delaying the differentiation of neuronal progenitors and leading to an overall final increase in neuronal production. Acts by enhancing the Notch signaling pathway via two different mechanisms that probably work in parallel to reach the same effect. Enhances Notch signaling pathway in a non-cell-autonomous manner via direct interaction with NOTCH2. Also promotes Notch signaling pathway in a cell-autonomous manner through inhibition of cis DLL1-NOTCH2 interactions, which promotes neuronal differentiation. The sequence is that of Notch homolog 2 N-terminal-like protein B from Homo sapiens (Human).